The following is a 413-amino-acid chain: Probable elongation factor 1-gamma 2 (413 aa).

Residues 1-82 (MALVMHTYKG…YVSRKNGDNS (82 aa)) enclose the GST N-terminal domain. In terms of domain architecture, GST C-terminal spans 87 to 215 (SLIEYAHIEQ…AKQTEAVPPV (129 aa)). The tract at residues 207-260 (KQTEAVPPVPTKKAPQPAKPKEEPKKAAPVAEAPKPAEEEEAPKPKAKNPLDLL) is disordered. The region spanning 253-413 (AKNPLDLLPP…EALLDAKCFK (161 aa)) is the EF-1-gamma C-terminal domain.

In terms of assembly, EF-1 is composed of four subunits: alpha, beta, delta, and gamma.

Probably plays a role in anchoring the complex to other cellular components. This Arabidopsis thaliana (Mouse-ear cress) protein is Probable elongation factor 1-gamma 2.